Consider the following 267-residue polypeptide: Tryptophan synthase alpha chain (267 aa).

Catalysis depends on proton acceptor residues E47 and D58.

It belongs to the TrpA family. As to quaternary structure, tetramer of two alpha and two beta chains.

The catalysed reaction is (1S,2R)-1-C-(indol-3-yl)glycerol 3-phosphate + L-serine = D-glyceraldehyde 3-phosphate + L-tryptophan + H2O. It functions in the pathway amino-acid biosynthesis; L-tryptophan biosynthesis; L-tryptophan from chorismate: step 5/5. Its function is as follows. The alpha subunit is responsible for the aldol cleavage of indoleglycerol phosphate to indole and glyceraldehyde 3-phosphate. The polypeptide is Tryptophan synthase alpha chain (Chlorobaculum parvum (strain DSM 263 / NCIMB 8327) (Chlorobium vibrioforme subsp. thiosulfatophilum)).